The primary structure comprises 300 residues: UDP-N-acetylenolpyruvoylglucosamine reductase (300 aa).

One can recognise an FAD-binding PCMH-type domain in the interval 28–190 (KIGGRVKYLV…TRAMMSFKKE (163 aa)). The active site involves Arg169. The active-site Proton donor is the Ser219. Residue Glu290 is part of the active site.

Belongs to the MurB family. It depends on FAD as a cofactor.

The protein resides in the cytoplasm. The enzyme catalyses UDP-N-acetyl-alpha-D-muramate + NADP(+) = UDP-N-acetyl-3-O-(1-carboxyvinyl)-alpha-D-glucosamine + NADPH + H(+). It functions in the pathway cell wall biogenesis; peptidoglycan biosynthesis. Its function is as follows. Cell wall formation. This is UDP-N-acetylenolpyruvoylglucosamine reductase from Thermotoga sp. (strain RQ2).